The sequence spans 70 residues: Putative membrane protein insertion efficiency factor (70 aa).

It belongs to the UPF0161 family.

It localises to the cell membrane. Its function is as follows. Could be involved in insertion of integral membrane proteins into the membrane. The chain is Putative membrane protein insertion efficiency factor from Clostridium novyi (strain NT).